The chain runs to 93 residues: Large ribosomal subunit protein bL31 (93 aa).

Positions 68–93 are disordered; that stretch reads GSADAAADEKKTDAKNNNKDNTSKED. Residues 74-93 are compositionally biased toward basic and acidic residues; it reads ADEKKTDAKNNNKDNTSKED.

This sequence belongs to the bacterial ribosomal protein bL31 family. Type A subfamily. As to quaternary structure, part of the 50S ribosomal subunit.

Functionally, binds the 23S rRNA. The protein is Large ribosomal subunit protein bL31 of Prochlorococcus marinus (strain MIT 9303).